We begin with the raw amino-acid sequence, 551 residues long: Adenine deaminase (551 aa).

This sequence belongs to the metallo-dependent hydrolases superfamily. Adenine deaminase family. Mn(2+) serves as cofactor.

The enzyme catalyses adenine + H2O + H(+) = hypoxanthine + NH4(+). The chain is Adenine deaminase from Leuconostoc citreum (strain KM20).